Consider the following 410-residue polypeptide: Centromere protein U (410 aa).

A disordered region spans residues methionine 1–serine 72. Residues arginine 4 to threonine 21 carry the Nuclear localization signal motif. Over residues arginine 28 to arginine 38 the composition is skewed to basic residues. The residue at position 73 (threonine 73) is a Phosphothreonine; by PLK1. Residues serine 87–histidine 228 form a disordered region. Over residues asparagine 101–isoleucine 115 the composition is skewed to polar residues. A phosphoserine mark is found at serine 105, serine 110, serine 114, serine 130, serine 133, and serine 135. Basic and acidic residues predominate over residues aspartate 138–proline 149. The span at proline 158–glutamate 169 shows a compositional bias: low complexity. Residue lysine 179 forms a Glycyl lysine isopeptide (Lys-Gly) (interchain with G-Cter in SUMO2) linkage. The residue at position 186 (serine 186) is a Phosphoserine. At threonine 191 the chain carries Phosphothreonine. Residues threonine 200–serine 218 are compositionally biased toward basic residues. Serine 224 carries the post-translational modification Phosphoserine. A coiled-coil region spans residues glutamine 289–asparagine 352. The short motif at lysine 295–leucine 312 is the Nuclear localization signal element.

It belongs to the CENP-U/AME1 family. Component of the CENPA-NAC complex, at least composed of CENPA, CENPC, CENPH, CENPM, CENPN, CENPT and CENPU. The CENPA-NAC complex interacts with the CENPA-CAD complex, composed of CENPI, CENPK, CENPL, CENPO, CENPP, CENPQ, CENPR and CENPS. Interacts with MLF1. Post-translationally, phosphorylated by PLK1 at Thr-73, creating a self-tethering site that specifically interacts with the polo-box domain of PLK1. In terms of tissue distribution, expressed at high levels in glioblastoma cell lines. Up-regulated in GBM (glioblastoma multiforme) tumors. Significantly increased in both the tumor core as well as the contralateral striatum and cortex in gliomas.

Its subcellular location is the cytoplasm. It is found in the nucleus. The protein localises to the chromosome. The protein resides in the centromere. It localises to the kinetochore. Functionally, component of the CENPA-NAC (nucleosome-associated) complex, a complex that plays a central role in assembly of kinetochore proteins, mitotic progression and chromosome segregation. The CENPA-NAC complex recruits the CENPA-CAD (nucleosome distal) complex and may be involved in incorporation of newly synthesized CENPA into centromeres. Plays an important role in the correct PLK1 localization to the mitotic kinetochores. A scaffold protein responsible for the initial recruitment and maintenance of the kinetochore PLK1 population until its degradation. Involved in transcriptional repression. This chain is Centromere protein U (Cenpu), found in Rattus norvegicus (Rat).